Here is a 242-residue protein sequence, read N- to C-terminus: Probable septum site-determining protein MinC (242 aa).

Belongs to the MinC family. In terms of assembly, interacts with MinD and FtsZ.

Functionally, cell division inhibitor that blocks the formation of polar Z ring septums. Rapidly oscillates between the poles of the cell to destabilize FtsZ filaments that have formed before they mature into polar Z rings. Prevents FtsZ polymerization. The chain is Probable septum site-determining protein MinC from Agrobacterium fabrum (strain C58 / ATCC 33970) (Agrobacterium tumefaciens (strain C58)).